Here is a 393-residue protein sequence, read N- to C-terminus: S-adenosylmethionine synthase 1 (393 aa).

Glu9 serves as a coordination point for Mg(2+). Residue His15 participates in ATP binding. Glu43 provides a ligand contact to K(+). The L-methionine site is built by Glu56 and Gln99. ATP-binding positions include 167-169 (DGK), 235-238 (SGRF), Asp246, 252-253 (RK), Ala269, Lys273, and Lys277. Asp246 contributes to the L-methionine binding site. Lys277 is an L-methionine binding site.

The protein belongs to the AdoMet synthase family. In terms of assembly, homotetramer. Mn(2+) is required as a cofactor. The cofactor is Mg(2+). Requires Co(2+) as cofactor. It depends on K(+) as a cofactor.

It localises to the cytoplasm. It carries out the reaction L-methionine + ATP + H2O = S-adenosyl-L-methionine + phosphate + diphosphate. It participates in amino-acid biosynthesis; S-adenosyl-L-methionine biosynthesis; S-adenosyl-L-methionine from L-methionine: step 1/1. Its function is as follows. Catalyzes the formation of S-adenosylmethionine from methionine and ATP. The reaction comprises two steps that are both catalyzed by the same enzyme: formation of S-adenosylmethionine (AdoMet) and triphosphate, and subsequent hydrolysis of the triphosphate. This Picea sitchensis (Sitka spruce) protein is S-adenosylmethionine synthase 1 (METK1).